Reading from the N-terminus, the 206-residue chain is MGSSEQELTAIVRDLGCGPYFLGTFDKRFPGFVSRDRLSCAIVNTAGRETGGVHWLAFGWNPKSHTCYLFDPFGFSDQRLKQIYQFEYESLLRRSALAATKDRCVTLEKSTQTVQGPFSAACGLFCCMFLHAFTHWPDHPMDKNPTMDLLTGVPNCMLQSPQVVGTLQRNQNELYKFLNNLSPYFRHNRERIEKATSFTKMQNGLK.

Residues His54, Asp71, and Cys122 contribute to the active site.

Belongs to the peptidase C5 family. As to quaternary structure, interacts with protease cofactor pVI-C; this interaction is necessary for protease activation.

Its subcellular location is the virion. It localises to the host nucleus. It catalyses the reaction Cleaves proteins of the adenovirus and its host cell at two consensus sites: -Yaa-Xaa-Gly-Gly-|-Xaa- and -Yaa-Xaa-Gly-Xaa-|-Gly- (in which Yaa is Met, Ile or Leu, and Xaa is any amino acid).. With respect to regulation, requires DNA and protease cofactor for maximal activation. Inside nascent virions, becomes partially activated by binding to the viral DNA, allowing it to cleave the cofactor that binds to the protease and fully activates it. Actin, like the viral protease cofactor, seems to act as a cofactor in the cleavage of cytokeratin 18 and of actin itself. Cleaves viral precursor proteins (pTP, pIIIa, pVI, pVII, pVIII, and pX) inside newly assembled particles giving rise to mature virions. Protease complexed to its cofactor slides along the viral DNA to specifically locate and cleave the viral precursors. Mature virions have a weakened organization compared to the unmature virions, thereby facilitating subsequent uncoating. Without maturation, the particle lacks infectivity and is unable to uncoat. Late in adenovirus infection, in the cytoplasm, may participate in the cytoskeleton destruction. Cleaves host cell cytoskeletal keratins K7 and K18. In Homo sapiens (Human), this protein is Protease.